A 295-amino-acid polypeptide reads, in one-letter code: Protease HtpX homolog (295 aa).

Transmembrane regions (helical) follow at residues 6–26 and 40–60; these read IGLF…VTSV and LSSL…VSLL. H148 serves as a coordination point for Zn(2+). E149 is an active-site residue. Position 152 (H152) interacts with Zn(2+). Helical transmembrane passes span 163–183 and 198–218; these read LIQG…SYAL and ISNI…VAYF. E223 is a Zn(2+) binding site.

The protein belongs to the peptidase M48B family. Zn(2+) serves as cofactor.

It is found in the cell inner membrane. This chain is Protease HtpX homolog, found in Leptospira borgpetersenii serovar Hardjo-bovis (strain JB197).